The primary structure comprises 62 residues: Synergistic-type venom protein C8S2, chain 1 (62 aa).

Disulfide bonds link Cys3/Cys24, Cys17/Cys42, and Cys46/Cys57.

The protein belongs to the three-finger toxin family. Short-chain subfamily. Aminergic toxin sub-subfamily. As to quaternary structure, heterodimer of C8S2 chain 1 and chain 2 (AC P01411); disulfide-linked. Expressed by the venom gland.

It localises to the secreted. Functionally, this protein shows a synergetic toxic effect in that it enhances the toxicity of other toxins. In Dendroaspis angusticeps (Eastern green mamba), this protein is Synergistic-type venom protein C8S2, chain 1.